A 354-amino-acid chain; its full sequence is NADH-quinone oxidoreductase subunit H (354 aa).

8 consecutive transmembrane segments (helical) span residues 22–42 (ILIRAVLIVVPLLLCVAYLIL), 91–111 (YLIAPLMVLMPAVAIWAVIPF), 124–144 (LLYVMAISSVGVYGVILAGWA), 168–188 (MGFALVTVLMVSGSLNLSAIV), 203–223 (VLSWNWIPLLPMFGVYFISGV), 255–275 (LFFLAEYINMIIISTITALLF), 291–311 (IPGFFWLLIKVFLLLSVFIWI), and 326–346 (LGWKVFIPLTVGWLIIVAIWI).

This sequence belongs to the complex I subunit 1 family. As to quaternary structure, NDH-1 is composed of 14 different subunits. Subunits NuoA, H, J, K, L, M, N constitute the membrane sector of the complex.

Its subcellular location is the cell inner membrane. It catalyses the reaction a quinone + NADH + 5 H(+)(in) = a quinol + NAD(+) + 4 H(+)(out). Its function is as follows. NDH-1 shuttles electrons from NADH, via FMN and iron-sulfur (Fe-S) centers, to quinones in the respiratory chain. The immediate electron acceptor for the enzyme in this species is believed to be ubiquinone. Couples the redox reaction to proton translocation (for every two electrons transferred, four hydrogen ions are translocated across the cytoplasmic membrane), and thus conserves the redox energy in a proton gradient. This subunit may bind ubiquinone. This chain is NADH-quinone oxidoreductase subunit H, found in Cupriavidus pinatubonensis (strain JMP 134 / LMG 1197) (Cupriavidus necator (strain JMP 134)).